The sequence spans 464 residues: DNA repair protein KRE29 (464 aa).

The segment at 1–69 (MGSVNSSPNE…SDEEFSSLEN (69 aa)) is disordered. Residues 53 to 65 (PENDSLNSDEEFS) show a composition bias toward acidic residues. Phosphoserine is present on residues Ser81 and Ser101.

In terms of assembly, component of the Smc5-Smc6 complex which consists of KRE29, MMS21, NSE1, NSE3, NSE4, NSE5, SMC5 and SMC6. Interacts with NSE5.

The protein resides in the nucleus. Its subcellular location is the cytoplasm. In terms of biological role, acts in a DNA repair pathway for removal of UV-induced DNA damage that is distinct from classical nucleotide excision repair and in repair of ionizing radiation damage. Functions in homologous recombination repair of DNA double strand breaks and in recovery of stalled replication forks. This chain is DNA repair protein KRE29 (KRE29), found in Saccharomyces cerevisiae (strain ATCC 204508 / S288c) (Baker's yeast).